A 312-amino-acid chain; its full sequence is Taste receptor type 2 member 9 (312 aa).

Over 1 to 9 the chain is Extracellular; the sequence is MPSAIEAIY. The helical transmembrane segment at 10–32 threads the bilayer; sequence IILIAGELTIGIWGNGFIVLVNC. Residues 33-52 lie on the Cytoplasmic side of the membrane; it reads IDWLKRRDISLIDIILISLA. The chain crosses the membrane as a helical span at residues 53-72; it reads ISRICLLCVISLDGFFMLLF. Residues 73 to 86 lie on the Extracellular side of the membrane; that stretch reads PGTYGNSVLVSIVN. A helical membrane pass occupies residues 87–109; the sequence is VVWTFANNSSLWFTSCLSIFYLL. The Cytoplasmic segment spans residues 110–128; that stretch reads KIANISHPFFFWLKLKINK. Residues 129 to 146 form a helical membrane-spanning segment; sequence VMLAILLGSFLISLIISV. The Extracellular portion of the chain corresponds to 147 to 180; that stretch reads PKNDDMWYHLFKVSHEENITWKFKVSKIPGTFKQ. A glycan (N-linked (GlcNAc...) asparagine) is linked at Asn-164. Residues 181–203 traverse the membrane as a helical segment; the sequence is LTLNLGVMVPFILCLISFFLLLF. The Cytoplasmic segment spans residues 204-234; it reads SLVRHTKQIRLHATGFRDPSTEAHMRAIKAV. The helical transmembrane segment at 235 to 257 threads the bilayer; the sequence is IIFLLLLIVYYPVFLVMTSSALI. Over 258–261 the chain is Extracellular; the sequence is PQGK. A helical transmembrane segment spans residues 262 to 284; it reads LVLMIGDIVTVIFPSSHSFILIM. Over 285-312 the chain is Cytoplasmic; the sequence is GNSKLREAFLKMLRFVKCFLRRRKPFVP.

It belongs to the G-protein coupled receptor T2R family. In terms of tissue distribution, expressed in subsets of taste receptor cells of the tongue and palate epithelium and exclusively in gustducin-positive cells.

Its subcellular location is the membrane. Its function is as follows. Gustducin-coupled receptor implicated in the perception of bitter compounds in the oral cavity and the gastrointestinal tract. Signals through PLCB2 and the calcium-regulated cation channel TRPM5. This Homo sapiens (Human) protein is Taste receptor type 2 member 9 (TAS2R9).